The primary structure comprises 319 residues: tRNA-cytidine(32) 2-sulfurtransferase (319 aa).

The short motif at 43–48 is the PP-loop motif element; the sequence is SGGKDS. [4Fe-4S] cluster-binding residues include Cys118, Cys121, and Cys209.

Belongs to the TtcA family. As to quaternary structure, homodimer. The cofactor is Mg(2+). [4Fe-4S] cluster is required as a cofactor.

It localises to the cytoplasm. It carries out the reaction cytidine(32) in tRNA + S-sulfanyl-L-cysteinyl-[cysteine desulfurase] + AH2 + ATP = 2-thiocytidine(32) in tRNA + L-cysteinyl-[cysteine desulfurase] + A + AMP + diphosphate + H(+). The protein operates within tRNA modification. In terms of biological role, catalyzes the ATP-dependent 2-thiolation of cytidine in position 32 of tRNA, to form 2-thiocytidine (s(2)C32). The sulfur atoms are provided by the cysteine/cysteine desulfurase (IscS) system. This is tRNA-cytidine(32) 2-sulfurtransferase from Neisseria meningitidis serogroup C / serotype 2a (strain ATCC 700532 / DSM 15464 / FAM18).